Here is a 323-residue protein sequence, read N- to C-terminus: Acetyl esterase (323 aa).

The short motif at 91 to 93 (HGG) is the Involved in the stabilization of the negatively charged intermediate by the formation of the oxyanion hole element. Catalysis depends on residues S165, D262, and H292.

The protein belongs to the 'GDXG' lipolytic enzyme family. In terms of assembly, homodimer. Interacts with MalT and MelA.

The protein localises to the cytoplasm. In terms of biological role, displays esterase activity towards short chain fatty esters (acyl chain length of up to 8 carbons). Able to hydrolyze triacetylglycerol (triacetin) and tributyrylglycerol (tributyrin), but not trioleylglycerol (triolein) or cholesterol oleate. Negatively regulates MalT activity by antagonizing maltotriose binding. Inhibits MelA galactosidase activity. This is Acetyl esterase from Salmonella schwarzengrund (strain CVM19633).